The primary structure comprises 263 residues: UPF0739 protein C1orf74 homolog (263 aa).

The protein belongs to the UPF0739 family.

The sequence is that of UPF0739 protein C1orf74 homolog from Bos taurus (Bovine).